The following is a 135-amino-acid chain: Small ribosomal subunit protein bS16 (135 aa).

Residues 82-135 (RPAETVGKAKQAAKREADAKQAAKEAAEAKAAAADEKAAEAEASDSAESESTEG) are disordered. Residues 94–121 (AKREADAKQAAKEAAEAKAAAADEKAAE) show a composition bias toward basic and acidic residues. Acidic residues predominate over residues 123–135 (EASDSAESESTEG).

This sequence belongs to the bacterial ribosomal protein bS16 family.

The protein is Small ribosomal subunit protein bS16 of Synechococcus sp. (strain CC9605).